The following is a 1040-amino-acid chain: Multidrug resistance protein MdtB (1040 aa).

12 helical membrane-spanning segments follow: residues Phe16–Ile36, Leu347–Ala367, Ile369–Leu389, Leu396–Ile416, Ile440–Phe460, Phe472–Pro492, Trp537–Ile557, Leu863–Ile883, Phe888–Ala908, Ile911–Val931, Ile968–Val988, and Ile998–Ile1018.

This sequence belongs to the resistance-nodulation-cell division (RND) (TC 2.A.6) family. MdtB subfamily. Part of a tripartite efflux system composed of MdtA, MdtB and MdtC. MdtB forms a heteromultimer with MdtC.

It localises to the cell inner membrane. Functionally, the MdtABC tripartite complex confers resistance against novobiocin and deoxycholate. The polypeptide is Multidrug resistance protein MdtB (Escherichia coli O8 (strain IAI1)).